The following is a 616-amino-acid chain: Schwannomin-interacting protein 1 homolog (616 aa).

Residues 38-50 show a composition bias toward acidic residues; the sequence is ESDLTDSDREDDP. Disordered regions lie at residues 38–71, 204–251, and 292–320; these read ESDLTDSDREDDPTFPSKMAKESGSETFKNGQDS, LKQT…PDTF, and SSLEIGGSGSQQNLDEDNNKVASRKYSNQ. Composition is skewed to polar residues over residues 62 to 71 and 204 to 217; these read SETFKNGQDS and LKQTSSTRLSGNST. The stretch at 550–594 forms a coiled coil; the sequence is LQLLVNNLQEYIENLNVTLLESLKERDDLNSDQDDILHDLEKINN.

This sequence belongs to the SCHIP1 family. As to quaternary structure, interacts with ex; the interaction results in recruitment of Schip1 to the apical cell membrane. Interacts with Tao; the interaction enhances Tao kinase activity. Interacts with Mer. As to expression, in eye disks of the third instar larvae, expressed in all cells (at protein level).

It is found in the cell junction. Its subcellular location is the adherens junction. The protein localises to the apical cell membrane. Regulator of the Hippo/SWH (Sav/Wts/Hpo) signaling pathway, a signaling pathway that plays a pivotal role in organ size control and tumor suppression by restricting proliferation and promoting apoptosis. The core of this pathway is composed of a kinase cascade wherein Hippo (hpo), in complex with its regulatory protein Salvador (sav), phosphorylates and activates Warts (wts) in complex with its regulatory protein Mats, which in turn phosphorylates and inactivates the Yorkie (yki) oncoprotein. Schip1 promotes kinase activity of Tao and enhances phosphorylation of hpo by Tao. The polypeptide is Schwannomin-interacting protein 1 homolog (Drosophila melanogaster (Fruit fly)).